Reading from the N-terminus, the 64-residue chain is Small ribosomal subunit protein bS21 (64 aa).

Residues 37-64 are disordered; it reads EKPSVKRKRKEKEAQRRLRKKMRMMKKA. Over residues 53–64 the composition is skewed to basic residues; that stretch reads RLRKKMRMMKKA.

The protein belongs to the bacterial ribosomal protein bS21 family.

The protein is Small ribosomal subunit protein bS21 of Syntrophotalea carbinolica (strain DSM 2380 / NBRC 103641 / GraBd1) (Pelobacter carbinolicus).